The primary structure comprises 182 residues: Orotate phosphoribosyltransferase (182 aa).

5-phospho-alpha-D-ribose 1-diphosphate is bound by residues Arg96, Lys97, Lys100, His102, and 122–130 (EDTSTTGGS). Orotate is bound by residues Thr126 and Arg154.

The protein belongs to the purine/pyrimidine phosphoribosyltransferase family. PyrE subfamily. As to quaternary structure, homodimer. Requires Mg(2+) as cofactor.

It catalyses the reaction orotidine 5'-phosphate + diphosphate = orotate + 5-phospho-alpha-D-ribose 1-diphosphate. It functions in the pathway pyrimidine metabolism; UMP biosynthesis via de novo pathway; UMP from orotate: step 1/2. Its function is as follows. Catalyzes the transfer of a ribosyl phosphate group from 5-phosphoribose 1-diphosphate to orotate, leading to the formation of orotidine monophosphate (OMP). The chain is Orotate phosphoribosyltransferase from Streptomyces coelicolor (strain ATCC BAA-471 / A3(2) / M145).